The sequence spans 36 residues: Glucagon (36 aa).

This sequence belongs to the glucagon family. In terms of tissue distribution, produced by the X-cells of the islets of pancreas.

It localises to the secreted. In terms of biological role, promotes hydrolysis of glycogen and lipids, and raises the blood sugar level. The sequence is that of Glucagon (gcg) from Hydrolagus colliei (Spotted ratfish).